We begin with the raw amino-acid sequence, 388 residues long: Succinate--CoA ligase [ADP-forming] subunit beta (388 aa).

The 236-residue stretch at 9-244 folds into the ATP-grasp domain; sequence KQLFARYGLP…QSQEDPREAQ (236 aa). ATP contacts are provided by residues lysine 46, 53 to 55, glutamate 99, threonine 102, and glutamate 107; that span reads GRG. 2 residues coordinate Mg(2+): asparagine 199 and aspartate 213. Substrate contacts are provided by residues asparagine 264 and 321–323; that span reads GIV.

Belongs to the succinate/malate CoA ligase beta subunit family. In terms of assembly, heterotetramer of two alpha and two beta subunits. Requires Mg(2+) as cofactor.

It catalyses the reaction succinate + ATP + CoA = succinyl-CoA + ADP + phosphate. The enzyme catalyses GTP + succinate + CoA = succinyl-CoA + GDP + phosphate. It participates in carbohydrate metabolism; tricarboxylic acid cycle; succinate from succinyl-CoA (ligase route): step 1/1. Functionally, succinyl-CoA synthetase functions in the citric acid cycle (TCA), coupling the hydrolysis of succinyl-CoA to the synthesis of either ATP or GTP and thus represents the only step of substrate-level phosphorylation in the TCA. The beta subunit provides nucleotide specificity of the enzyme and binds the substrate succinate, while the binding sites for coenzyme A and phosphate are found in the alpha subunit. The protein is Succinate--CoA ligase [ADP-forming] subunit beta of Enterobacter sp. (strain 638).